The chain runs to 211 residues: uncharacterized protein (211 aa).

Positions alanine 155 to serine 211 are disordered. The segment covering threonine 178 to aspartate 188 has biased composition (acidic residues). Residues serine 195–serine 211 show a composition bias toward low complexity.

This is an uncharacterized protein from Schizosaccharomyces pombe (strain 972 / ATCC 24843) (Fission yeast).